Reading from the N-terminus, the 917-residue chain is MENILCFLNSYTETGLSPDSHCLDIDLNFICLSGLGLFILYLFYMVLTLYSSPTEKNNDTQKHQGRARRKRKSVTFKDRKSLQKEAEEERKLHSFLKSFGPPVSCSPLGQHHDTTLFRRLLCPDPVCRVCNRATADIQRLLSWESLKDAAPSVSPLASSASGAESSFTLASTPSATTPEDLILSSRPKPSPPPPLILSPDLITTLADLFSPSPLRDPLPPQPVSPLDSKFPIDHSPPQQLPFPLLPPHHIERVEPSLQPEASLSLNTIFSFGSTLCQDISQAVNRTDSCARHHGPPTPSALPPEDCTVTQSKSNLTVLKTFPEMLSLGGSGGSSTSAPTTKGIDHSCPASSEFSWWQPHAKDSFSSNFVPSDFMEELLTLHSSEASLGGHSVANIIQPVNISFLSHDIPALLERQVKRRGDFLMWKENGKKPGSFPTQLRPNYQLNSSRNMLTSTAVKHDLAESFPFWASKGKLEWQHIHQQPPYSKCFEDHLEQKYVQLFWGLPSLHSESLHPTVFVQHGRSSMFVFFNGITNTSMSHESPVLPPPQPLFLPSTQPLPLPQTLPRGQSLHLTQVKSLAQPQSPFPALPPSPLFLIRVCGVCFHRPQNEARSLMPSEINHLEWNVLQKVQESVWGLPSVVQKSQEDFCPPAPNPVLVRKSFKVHVPISIIPGDFPLSSEVRKKLEQHIRKRLIQRRWGLPRRIHESLSLLRPQNKISELSVSESIHGPLNISLVEGQRCNVLKKSASSFPRSFHERSSNMLSMENVGNYQGCSQETAPKNHLLHDPETSSEEDLRSNSERDLGTHMMHLSGNDSGVRLGQKQLENALTVHLSKKFEEINEGRMPGTVHSSWHSVKQTICLPEKSHSQIKHRNLAALVSEDHRVDTSQEMSFLSSNKQKMLEAHIKSFHMKPILNLSI.

Residues 29 to 49 (FICLSGLGLFILYLFYMVLTL) form a helical membrane-spanning segment. Disordered stretches follow at residues 55 to 80 (EKNN…KDRK), 152 to 195 (SVSP…PPPL), and 773 to 797 (SQET…LRSN). Over residues 63–74 (HQGRARRKRKSV) the composition is skewed to basic residues. A compositionally biased stretch (low complexity) spans 152 to 163 (SVSPLASSASGA). Residues 164–177 (ESSFTLASTPSATT) show a composition bias toward polar residues. Positions 782 to 797 (LLHDPETSSEEDLRSN) are enriched in basic and acidic residues.

The protein belongs to the SPATA31 family.

The protein localises to the membrane. In terms of biological role, may play a role in spermatogenesis. This is Spermatogenesis-associated protein 31D3 (SPATA31D3) from Homo sapiens (Human).